The following is a 283-amino-acid chain: MDTVSLTGKELAAALNADTKQRAEALTAGGVAARLALIVANDDPASAWYVNSLRKAAERLGIACERIDLGADATADGIRAELRERSADPAFDAIMLQTPLPASVALDDVSSAIAADKDVDGVSPLSLGLLAAGLAGFVPATAQAVVELLKHHEIALSGRHVAVVGRSNVVGKPLAQLLLAENATVTVCHSRTTDLAAITSTADVVVAAVGRAGLVTGDHVRAGAVVVDVGTNEAEDGGIVGDVDAESVRGKAAGLSPVPGGVGPVTTALLMRHVVEAAERHRG.

NADP(+) contacts are provided by residues 165 to 167, S190, and T231; that span reads GRS.

The protein belongs to the tetrahydrofolate dehydrogenase/cyclohydrolase family. Homodimer.

The catalysed reaction is (6R)-5,10-methylene-5,6,7,8-tetrahydrofolate + NADP(+) = (6R)-5,10-methenyltetrahydrofolate + NADPH. It catalyses the reaction (6R)-5,10-methenyltetrahydrofolate + H2O = (6R)-10-formyltetrahydrofolate + H(+). Its pathway is one-carbon metabolism; tetrahydrofolate interconversion. Its function is as follows. Catalyzes the oxidation of 5,10-methylenetetrahydrofolate to 5,10-methenyltetrahydrofolate and then the hydrolysis of 5,10-methenyltetrahydrofolate to 10-formyltetrahydrofolate. The protein is Bifunctional protein FolD of Nocardia farcinica (strain IFM 10152).